The sequence spans 151 residues: MELNQLKSVPKARNHKTKTLGRGHGSGLGKTSGRGQKGQKARKSGLTRPGFEGGQTPLYRRLPKFGNARKGFLKQEWVVLNLNKIAKLKLDKINRASLIEKQVISAKSQLPIKLIGHTKLEKPLHFEVHKVSKQALKAVENANGSVKLLEK.

A disordered region spans residues 1-58; it reads MELNQLKSVPKARNHKTKTLGRGHGSGLGKTSGRGQKGQKARKSGLTRPGFEGGQTPL. A compositionally biased stretch (basic residues) spans 10 to 21; it reads PKARNHKTKTLG. Gly residues predominate over residues 22 to 36; sequence RGHGSGLGKTSGRGQ.

This sequence belongs to the universal ribosomal protein uL15 family. In terms of assembly, part of the 50S ribosomal subunit.

Functionally, binds to the 23S rRNA. This Mycoplasma pneumoniae (strain ATCC 29342 / M129 / Subtype 1) (Mycoplasmoides pneumoniae) protein is Large ribosomal subunit protein uL15.